Here is a 137-residue protein sequence, read N- to C-terminus: uncharacterized protein (137 aa).

Belongs to the DCC thiol-disulfide oxidoreductase family.

This is an uncharacterized protein from Bacillus subtilis (strain 168).